A 1213-amino-acid chain; its full sequence is DNA-directed RNA polymerase subunit beta' (1213 aa).

Residues cysteine 60, cysteine 62, cysteine 75, and cysteine 78 each contribute to the Zn(2+) site. Aspartate 450, aspartate 452, and aspartate 454 together coordinate Mg(2+). Positions 819, 893, 900, and 903 each coordinate Zn(2+).

This sequence belongs to the RNA polymerase beta' chain family. As to quaternary structure, the RNAP catalytic core consists of 2 alpha, 1 beta, 1 beta' and 1 omega subunit. When a sigma factor is associated with the core the holoenzyme is formed, which can initiate transcription. The cofactor is Mg(2+). Zn(2+) serves as cofactor.

It catalyses the reaction RNA(n) + a ribonucleoside 5'-triphosphate = RNA(n+1) + diphosphate. DNA-dependent RNA polymerase catalyzes the transcription of DNA into RNA using the four ribonucleoside triphosphates as substrates. This chain is DNA-directed RNA polymerase subunit beta', found in Streptococcus pyogenes serotype M4 (strain MGAS10750).